The following is a 708-amino-acid chain: Double-strand break repair protein MRE11 (708 aa).

An N-acetylserine modification is found at Ser-2. Phosphoserine is present on Ser-2. Mn(2+) contacts are provided by Asp-20, His-22, and Asp-60. An interaction with NBN region spans residues 87–117 (RPVQFEILSDQSVNFGFSKFPWVNYQDGNLN). Asn-128 contacts Mn(2+). The active-site Proton donor is His-129. Residues His-217, His-245, and His-247 each coordinate Mn(2+). Residue Lys-255 forms a Glycyl lysine isopeptide (Lys-Gly) (interchain with G-Cter in SUMO2) linkage. Ser-275 is modified (phosphoserine). Lys-282 participates in a covalent cross-link: Glycyl lysine isopeptide (Lys-Gly) (interchain with G-Cter in UFM1). Lys-339 is covalently cross-linked (Glycyl lysine isopeptide (Lys-Gly) (interchain with G-Cter in ubiquitin)). A Glycyl lysine isopeptide (Lys-Gly) (interchain with G-Cter in SUMO) cross-link involves residue Lys-384. A Glycyl lysine isopeptide (Lys-Gly) (interchain with G-Cter in SUMO2) cross-link involves residue Lys-416. Lys-467 is covalently cross-linked (Glycyl lysine isopeptide (Lys-Gly) (interchain with G-Cter in SUMO)). A Glycyl lysine isopeptide (Lys-Gly) (interchain with G-Cter in ubiquitin) cross-link involves residue Lys-480. Disordered stretches follow at residues 507-540 (TRQK…ASAF) and 556-614 (NDSD…AVSA). Over residues 569 to 579 (GRGRGRGRRGG) the composition is skewed to basic residues. Arg-570, Arg-572, Arg-574, Arg-576, Arg-577, Arg-580, Arg-587, Arg-592, and Arg-594 each carry asymmetric dimethylarginine. The GAR motif lies at 570-594 (RGRGRGRRGGRGQNSASRGGSQRGR). A compositionally biased stretch (polar residues) spans 599–614 (LETSTRSRNSKTAVSA). Ser-619 carries the post-translational modification Phosphoserine. Residue Lys-625 forms a Glycyl lysine isopeptide (Lys-Gly) (interchain with G-Cter in SUMO2) linkage. Residue Ser-641 is modified to Phosphoserine. Phosphoserine; by PLK1 is present on Ser-649. A disordered region spans residues 651-708 (VEEDIFPTTSKTDQRWSSTSSSKIMSQSQVSKGVDFESSEDDDDDPFMNTSSLRRNRR). The span at 667-681 (SSTSSSKIMSQSQVS) shows a compositional bias: low complexity. Position 673 is an N6-lactoyllysine (Lys-673). Phosphoserine; by ATM occurs at positions 676 and 678. Residues 687–696 (ESSEDDDDDP) are compositionally biased toward acidic residues. Ser-688 bears the Phosphoserine; by CDK2 mark. A phosphoserine mark is found at Ser-689 and Ser-701. A compositionally biased stretch (polar residues) spans 698 to 708 (MNTSSLRRNRR).

Belongs to the MRE11/RAD32 family. Component of the MRN complex composed of two heterodimers RAD50 and MRE11 associated with a single NBN. The MRN complexes dimerize on DNA to form joined MRN-MRN oligomers required for DNA double-strand break repair. As part of the MRN complex, interacts with MCM9; the interaction recruits the complex to DNA repair sites. Component of the BASC complex, at least composed of BRCA1, MSH2, MSH6, MLH1, ATM, BLM, RAD50, MRE11 and NBN. Found in a complex with TERF2. Interacts with DCLRE1C/Artemis and DCLRE1B/Apollo. Interacts with ATF2. Interacts with EXD2. Interacts with MRNIP. Interacts with SAMHD1; leading to stimulate 3'-5' exonuclease activity. Interacts (when ubiquitinated) with UBQLN4 (via its UBA domain). Interacts with CYREN (via XLF motif). Interacts with GFI1; promoting methylation by PRMT1. Interacts with DYNLL1; inhibiting the activity of MRE11. Interacts with C1QBP and RAD50; interaction takes place in absence of DNA damage to form the MRC (MRE11-RAD50-C1QBP) complex that inhibits the activity of MRE11. Interacts with AGER/RAGE. AGER is recruited to DNA double-strand break sites where it enhances MRE11 endonuclease activity to promote DNA repair. In terms of assembly, (Microbial infection) Interacts with herpes simplex virus 1 protein UL12. The cofactor is Mn(2+). In terms of processing, phosphorylated by ATM at Ser-676 and Ser-678 in response to DNA damage, promoting MRE11 activity: phosphorylation activates MRE11 by preventing the interaction between MRE11 and the C1QBP inhibitor. Phosphorylation at Ser-649 by PLK1 primes for phosphorylation at Ser-688 by CK2, inhibiting recruitment of the MRN complex to DNA damage sites. Post-translationally, asymmetric dimethylation by PRMT1 promotes MRE11 exonuclease activity. Lactylation at Lys-673 by CREBBP/CBP in response to DNA damage promotes DNA binding and MRE11 activity. In terms of processing, acetylated on lysine residues by KAT2A /GCN5. Post-translationally, ubiquitinated following DNA damage. Ubiquitination triggers interaction with UBQLN4, leading to MRE11 removal from chromatin and degradation by the proteasome. Ubiquitinated at Lys-339 and Lys-480 by RNF126 via 'Lys-27'- and 'Lys-29'-linked polyubiquitin chains, promoting the exonuclease activity of MRE11. SUMOylated by PIAS1, stabilizing MRE11 on chromatin during end resection. DeSUMOylated by SENP3 following removal from DNA double-strand breaks (DSBs). In terms of processing, ufmylation at Lys-282 promotes MRE11 activity and is required for activation of the ATM and ATR kinases by the MRN complex. Post-translationally, (Microbial infection) Following infection by adenovirus E4, ubiquitinated and degraded by a SCF-like E3 ubiquitin ligase complex containing viral proteins E1B-55K and E4-ORF6.

The protein localises to the nucleus. Its subcellular location is the chromosome. The protein resides in the telomere. Interaction with SAMHD1 stimulates the double-strand-specific 3'-5' exonuclease activity. RBBP8/CtIP specifically promotes the endonuclease activity to clear protein-DNA adducts and generate clean double-strand break ends. DYNLL1-binding inhibits the activity of MRE11. MRE11 activity is inhibited by C1QBP: in absence of DNA damage, C1QBP interacts with unphosphorylated MRE11, preventing formation and activity of the MRN complex. The mirin-derivative PFM39, specifically inhibits the 3'-5' exonuclease activity. The N-alkylated mirin-derivatives PFM03 and PFM01 specifically inhibit the endonuclease activity. Functionally, core component of the MRN complex, which plays a central role in double-strand break (DSB) repair, DNA recombination, maintenance of telomere integrity and meiosis. The MRN complex is involved in the repair of DNA double-strand breaks (DSBs) via homologous recombination (HR), an error-free mechanism which primarily occurs during S and G2 phases. The complex (1) mediates the end resection of damaged DNA, which generates proper single-stranded DNA, a key initial steps in HR, and is (2) required for the recruitment of other repair factors and efficient activation of ATM and ATR upon DNA damage. Within the MRN complex, MRE11 possesses both single-strand endonuclease activity and double-strand-specific 3'-5' exonuclease activity. After DSBs, MRE11 is loaded onto DSBs sites and cleaves DNA by cooperating with RBBP8/CtIP to initiate end resection. MRE11 first endonucleolytically cleaves the 5' strand at DNA DSB ends to prevent non-homologous end joining (NHEJ) and licence HR. It then generates a single-stranded DNA gap via 3' to 5' exonucleolytic degradation to create entry sites for EXO1- and DNA2-mediated 5' to 3' long-range resection, which is required for single-strand invasion and recombination. RBBP8/CtIP specifically promotes the endonuclease activity of MRE11 to clear protein-DNA adducts and generate clean double-strand break ends. MRE11 endonuclease activity is also enhanced by AGER/RAGE. The MRN complex is also required for DNA damage signaling via activation of the ATM and ATR kinases: the nuclease activity of MRE11 is not required to activate ATM and ATR. The MRN complex is also required for the processing of R-loops. The MRN complex is involved in the activation of the cGAS-STING pathway induced by DNA damage during tumorigenesis: the MRN complex acts by displacing CGAS from nucleosome sequestration, thereby activating it. In telomeres the MRN complex may modulate t-loop formation. In terms of biological role, MRE11 contains two DNA-binding domains (DBDs), enabling it to bind both single-stranded DNA (ssDNA) and double-stranded DNA (dsDNA). The chain is Double-strand break repair protein MRE11 from Homo sapiens (Human).